Here is a 397-residue protein sequence, read N- to C-terminus: Bifunctional enzyme IspD/IspF (397 aa).

The segment at 1–236 is 2-C-methyl-D-erythritol 4-phosphate cytidylyltransferase; that stretch reads MSIAAIILAA…LKGMQIFPDI (236 aa). A 2-C-methyl-D-erythritol 2,4-cyclodiphosphate synthase region spans residues 237–397; sequence RTGNGYDVHS…TVIYPGEIPK (161 aa). The a divalent metal cation site is built by D243 and H245. 4-CDP-2-C-methyl-D-erythritol 2-phosphate-binding positions include 243-245 and 269-270; these read DVH and HS. H277 contacts a divalent metal cation. Residues 291–293, 367–370, F374, and R377 contribute to the 4-CDP-2-C-methyl-D-erythritol 2-phosphate site; these read DIG and TTNE.

In the N-terminal section; belongs to the IspD/TarI cytidylyltransferase family. IspD subfamily. The protein in the C-terminal section; belongs to the IspF family. A divalent metal cation serves as cofactor.

It carries out the reaction 2-C-methyl-D-erythritol 4-phosphate + CTP + H(+) = 4-CDP-2-C-methyl-D-erythritol + diphosphate. It catalyses the reaction 4-CDP-2-C-methyl-D-erythritol 2-phosphate = 2-C-methyl-D-erythritol 2,4-cyclic diphosphate + CMP. It functions in the pathway isoprenoid biosynthesis; isopentenyl diphosphate biosynthesis via DXP pathway; isopentenyl diphosphate from 1-deoxy-D-xylulose 5-phosphate: step 2/6. Its pathway is isoprenoid biosynthesis; isopentenyl diphosphate biosynthesis via DXP pathway; isopentenyl diphosphate from 1-deoxy-D-xylulose 5-phosphate: step 4/6. In terms of biological role, bifunctional enzyme that catalyzes the formation of 4-diphosphocytidyl-2-C-methyl-D-erythritol from CTP and 2-C-methyl-D-erythritol 4-phosphate (MEP) (IspD), and catalyzes the conversion of 4-diphosphocytidyl-2-C-methyl-D-erythritol 2-phosphate (CDP-ME2P) to 2-C-methyl-D-erythritol 2,4-cyclodiphosphate (ME-CPP) with a corresponding release of cytidine 5-monophosphate (CMP) (IspF). This is Bifunctional enzyme IspD/IspF from Bartonella bacilliformis (strain ATCC 35685 / KC583 / Herrer 020/F12,63).